A 1290-amino-acid polypeptide reads, in one-letter code: Alpha-amylase (1290 aa).

Positions 1–31 are cleaved as a signal peptide; the sequence is MTRKTRYLHQITTLILGGLLIVPAAAPPVSA. Residue Glu231 is the Nucleophile of the active site. Asp373 serves as the catalytic Proton donor. The Fibronectin type-III domain occupies 817 to 902; it reads VPANLQATVM…AAATATTPAG (86 aa). The tract at residues 902–978 is CBM25; that stretch reads GNHVTVYYKQ…SNGGSNYLFG (77 aa). Composition is skewed to low complexity over residues 994–1008 and 1016–1031; these read APVA…APTA and VTPT…VAPT. The disordered stretch occupies residues 994–1037; that stretch reads APVAPSATPTVAPTATPTPKPSVTPTVTPITTPTVAPTLSPTPT. Residues 1092–1171 are CBM25; it reads GNSATIYYKN…NGGSNYHFGT (80 aa). Residues 1183–1289 form the CBM20 domain; that stretch reads TGEPQADSVT…VTLTVQRWKD (107 aa).

It belongs to the glycosyl hydrolase 119 (GH119) family.

It is found in the secreted. It catalyses the reaction Endohydrolysis of (1-&gt;4)-alpha-D-glucosidic linkages in polysaccharides containing three or more (1-&gt;4)-alpha-linked D-glucose units.. Functionally, acts on maltooligosaccharides that have a degree of polymerization (DP) of 4 or more, amylose, and soluble or raw starch to produce glucose and maltooligosaccharides up to DP5 by a hydrolysis reaction. Also acts on maltooligosyl trehaloses that have DP5 or more to produce trehalose as the major hydrolysis product. This Niallia circulans (Bacillus circulans) protein is Alpha-amylase.